The primary structure comprises 192 residues: UPF0301 protein BceJ2315_30870 (192 aa).

It belongs to the UPF0301 (AlgH) family.

The polypeptide is UPF0301 protein BceJ2315_30870 (Burkholderia cenocepacia (strain ATCC BAA-245 / DSM 16553 / LMG 16656 / NCTC 13227 / J2315 / CF5610) (Burkholderia cepacia (strain J2315))).